The chain runs to 678 residues: Zinc finger translocation-associated protein (678 aa).

Disordered regions lie at residues 1 to 100 (MEPG…PGRD), 182 to 250 (LGVQ…GSRG), 329 to 417 (QPEA…HRRH), and 490 to 583 (LGPP…NYQP). Residues 62–78 (SAPLPSSRARGPASSGR) show a composition bias toward low complexity. A compositionally biased stretch (basic and acidic residues) spans 79-88 (KYSDHCEARA). A compositionally biased stretch (acidic residues) spans 187–201 (AEEEEEEEEEEEEEG). A Glycyl lysine isopeptide (Lys-Gly) (interchain with G-Cter in SUMO2) cross-link involves residue Lys375. Positions 388 to 398 (AEEEEELEEGE) are enriched in acidic residues. Residues 492–504 (PPRPESPQGPIPP) are compositionally biased toward pro residues. Composition is skewed to acidic residues over residues 513 to 529 (GGGD…EEWG) and 543 to 553 (AEEEEDEEDGQ). Over residues 560–572 (LPPPPPPPPPPPP) the composition is skewed to pro residues. A compositionally biased stretch (basic and acidic residues) spans 573 to 583 (RSREQRRNYQP).

In Homo sapiens (Human), this protein is Zinc finger translocation-associated protein.